Reading from the N-terminus, the 125-residue chain is Small ribosomal subunit protein uS12 (125 aa).

D89 carries the 3-methylthioaspartic acid modification.

It belongs to the universal ribosomal protein uS12 family. As to quaternary structure, part of the 30S ribosomal subunit. Contacts proteins S8 and S17. May interact with IF1 in the 30S initiation complex.

With S4 and S5 plays an important role in translational accuracy. In terms of biological role, interacts with and stabilizes bases of the 16S rRNA that are involved in tRNA selection in the A site and with the mRNA backbone. Located at the interface of the 30S and 50S subunits, it traverses the body of the 30S subunit contacting proteins on the other side and probably holding the rRNA structure together. The combined cluster of proteins S8, S12 and S17 appears to hold together the shoulder and platform of the 30S subunit. This chain is Small ribosomal subunit protein uS12, found in Clostridium botulinum (strain Alaska E43 / Type E3).